The primary structure comprises 415 residues: Carboxypeptidase B (415 aa).

An N-terminal signal peptide occupies residues 1–13 (MLLLLALVSVALA). Residues 14–108 (HASEEHFDGN…LESQFDSHTR (95 aa)) constitute a propeptide, activation peptide. The Peptidase M14 domain occupies 116 to 410 (KYNKWETIEA…LAVKYIANYV (295 aa)). A disulfide bond links C171 and C184. Residues H174 and E177 each coordinate Zn(2+). Substrate contacts are provided by residues 174 to 177 (HARE), R232, and 249 to 250 (NR). Intrachain disulfides connect C243–C266 and C257–C271. H302 is a Zn(2+) binding site. Residues 303-304 (SY) and Y354 contribute to the substrate site. E376 (proton donor/acceptor) is an active-site residue.

Belongs to the peptidase M14 family. Zn(2+) is required as a cofactor.

The protein resides in the secreted. Its subcellular location is the zymogen granule lumen. The enzyme catalyses Preferential release of a C-terminal lysine or arginine amino acid.. The polypeptide is Carboxypeptidase B (Cpb1) (Rattus norvegicus (Rat)).